A 184-amino-acid polypeptide reads, in one-letter code: Mediator of RNA polymerase II transcription subunit 11 (184 aa).

Polar residues predominate over residues 142–152; it reads ATTKQETNINN. Positions 142–184 are disordered; it reads ATTKQETNINNEDSEKEKQENITAIETKKESSENEDEDFDMIA. Over residues 154 to 173 the composition is skewed to basic and acidic residues; that stretch reads DSEKEKQENITAIETKKESS. Positions 174–184 are enriched in acidic residues; that stretch reads ENEDEDFDMIA.

This sequence belongs to the Mediator complex subunit 11 family. In terms of assembly, component of the Mediator complex.

The protein localises to the nucleus. In terms of biological role, component of the Mediator complex, a coactivator involved in the regulated transcription of nearly all RNA polymerase II-dependent genes. Mediator functions as a bridge to convey information from gene-specific regulatory proteins to the basal RNA polymerase II transcription machinery. Mediator is recruited to promoters by direct interactions with regulatory proteins and serves as a scaffold for the assembly of a functional pre-initiation complex with RNA polymerase II and the general transcription factors. This Debaryomyces hansenii (strain ATCC 36239 / CBS 767 / BCRC 21394 / JCM 1990 / NBRC 0083 / IGC 2968) (Yeast) protein is Mediator of RNA polymerase II transcription subunit 11 (MED11).